The primary structure comprises 228 residues: MNYNPFQWTFKSEQTANEFNEHVEKSVPFYKEIHKIVKIIGGFFVEENTNVYDIGSSTGNLLKGMSNILKRNANYIGIDNSIYMNQVAMNDADSDNIKIISEDVQDFKFTNASYITSILTLQFINIEDREKTIKNVYQGLNKGGAFILVEKVNGEFVQSHEIMNQIYHDFKLENGLTYEEVIKKSQSIRGVLKPLTLKQNKRMLEKAGFKDIDTWFKWNNFVGIIAVK.

S-adenosyl-L-methionine-binding positions include tyrosine 30, glycine 55 to serine 57, aspartate 79 to asparagine 80, and aspartate 103 to valine 104.

Belongs to the class I-like SAM-binding methyltransferase superfamily. Cx-SAM synthase family.

The catalysed reaction is prephenate + S-adenosyl-L-methionine = carboxy-S-adenosyl-L-methionine + 3-phenylpyruvate + H2O. Functionally, catalyzes the conversion of S-adenosyl-L-methionine (SAM) to carboxy-S-adenosyl-L-methionine (Cx-SAM). The protein is Carboxy-S-adenosyl-L-methionine synthase of Staphylococcus epidermidis (strain ATCC 35984 / DSM 28319 / BCRC 17069 / CCUG 31568 / BM 3577 / RP62A).